The chain runs to 279 residues: Protein phosphatase 1 regulatory subunit 3E (279 aa).

Phosphoserine is present on residues Ser16 and Ser33. The tract at residues 28–89 (RSQRPSLEEE…RSPDTRKRVR (62 aa)) is disordered. The segment covering 51-65 (ARSRAHVPGRGRRAR) has biased composition (basic residues). Residue Ser66 is modified to Phosphoserine. Positions 87–90 (RVRF) match the PP1-binding motif motif. A CBM21 domain is found at 154–259 (AARLQAQRIC…NNGGRDYALL (106 aa)). The tract at residues 176-198 (GSARVLDLAYEKRVSVRWSADGW) is glycogen-binding motif. The tract at residues 248–256 (WDNNGGRDY) is substrate-binding motif.

In terms of tissue distribution, expressed in liver and heart, with low levels in skeletal muscle.

In terms of biological role, acts as a glycogen-targeting subunit for PP1. PP1 is involved in glycogen metabolism and contributes to the activation of glycogen synthase leading to an increase in glycogen synthesis. The polypeptide is Protein phosphatase 1 regulatory subunit 3E (Ppp1r3e) (Rattus norvegicus (Rat)).